Reading from the N-terminus, the 454-residue chain is Putative serine/threonine-protein phosphatase C27B7.6 (454 aa).

The Mn(2+) site is built by aspartate 65, histidine 67, aspartate 93, and asparagine 125. The active-site Proton donor is histidine 126. Mn(2+) contacts are provided by histidine 174 and histidine 252. Residues 414–454 (RKKLGMTTSTTPPPPRTPSPDAPLAQSPPIPRSPPSSTENA) are disordered. A compositionally biased stretch (pro residues) spans 424–447 (TPPPPRTPSPDAPLAQSPPIPRSP).

It belongs to the PPP phosphatase family. PP-1 subfamily. Mn(2+) is required as a cofactor.

The catalysed reaction is O-phospho-L-seryl-[protein] + H2O = L-seryl-[protein] + phosphate. The enzyme catalyses O-phospho-L-threonyl-[protein] + H2O = L-threonyl-[protein] + phosphate. This Caenorhabditis elegans protein is Putative serine/threonine-protein phosphatase C27B7.6.